A 98-amino-acid chain; its full sequence is Beta-elicitin cinnamomin (98 aa).

3 disulfides stabilise this stretch: Cys-3-Cys-71, Cys-27-Cys-56, and Cys-51-Cys-95. The Beak-like motif 1 (ligand binding) signature appears at 33-42; that stretch reads YSMLTATALP. The Beak-like motif 2 (ligand binding) motif lies at 72 to 83; sequence DLTVPTSGLVLD.

It belongs to the elicitin family.

The protein localises to the secreted. In terms of biological role, induces local and distal defense responses (incompatible hypersensitive reaction) in plants from the solanaceae and cruciferae families. Elicits leaf necrosis and causes the accumulation of pathogenesis-related proteins. Might interact with the lipidic molecules of the plasma membrane. Elicitins are able to load, carry, and transfer sterols between membranes. This is Beta-elicitin cinnamomin from Phytophthora cinnamomi (Cinnamon fungus).